Here is a 171-residue protein sequence, read N- to C-terminus: Mitochondrial import inner membrane translocase subunit Tim17-A (171 aa).

Cys9 and Cys78 form a disulfide bridge. Helical transmembrane passes span 17–37 (CGGA…FKGF), 63–77 (GGSF…STID), and 113–133 (VGSA…GILL). Positions 144–171 (GPQFTEDHSQLPSSQLPSSPFGDYRQYQ) are disordered. Positions 153 to 163 (QLPSSQLPSSP) are enriched in low complexity.

This sequence belongs to the Tim17/Tim22/Tim23 family. As to quaternary structure, component of the TIM23 complex at least composed of TIMM23, TIMM17 (TIMM17A or TIMM17B) and TIMM50. The complex interacts with the TIMM44 component of the PAM complex and with DNAJC15. In terms of processing, degraded by YMEL1 downstream of the integrated stress response (ISR).

Its subcellular location is the mitochondrion inner membrane. Its function is as follows. Essential component of the TIM23 complex, a complex that mediates the translocation of transit peptide-containing proteins across the mitochondrial inner membrane. This Mus musculus (Mouse) protein is Mitochondrial import inner membrane translocase subunit Tim17-A (Timm17a).